Consider the following 775-residue polypeptide: Dipeptidyl peptidase 4 (775 aa).

Positions 1–15 are cleaved as a signal peptide; sequence MKFLSLLLLAGIAQA. 4 N-linked (GlcNAc...) asparagine glycosylation sites follow: Asn-81, Asn-111, Asn-170, and Asn-219. Active-site charge relay system residues include Ser-613, Asp-690, and His-725.

It belongs to the peptidase S9B family.

Its subcellular location is the secreted. The catalysed reaction is Release of an N-terminal dipeptide, Xaa-Yaa-|-Zaa-, from a polypeptide, preferentially when Yaa is Pro, provided Zaa is neither Pro nor hydroxyproline.. Extracellular dipeptidyl-peptidase which removes N-terminal dipeptides sequentially from polypeptides having unsubstituted N-termini provided that the penultimate residue is proline. Contributes to pathogenicity. In Trichophyton equinum (Horse ringworm fungus), this protein is Dipeptidyl peptidase 4 (DPP4).